The chain runs to 171 residues: Peptide methionine sulfoxide reductase MsrA (171 aa).

Cysteine 12 is an active-site residue.

This sequence belongs to the MsrA Met sulfoxide reductase family.

It carries out the reaction L-methionyl-[protein] + [thioredoxin]-disulfide + H2O = L-methionyl-(S)-S-oxide-[protein] + [thioredoxin]-dithiol. The enzyme catalyses [thioredoxin]-disulfide + L-methionine + H2O = L-methionine (S)-S-oxide + [thioredoxin]-dithiol. Functionally, has an important function as a repair enzyme for proteins that have been inactivated by oxidation. Catalyzes the reversible oxidation-reduction of methionine sulfoxide in proteins to methionine. This chain is Peptide methionine sulfoxide reductase MsrA, found in Leuconostoc mesenteroides subsp. mesenteroides (strain ATCC 8293 / DSM 20343 / BCRC 11652 / CCM 1803 / JCM 6124 / NCDO 523 / NBRC 100496 / NCIMB 8023 / NCTC 12954 / NRRL B-1118 / 37Y).